A 664-amino-acid polypeptide reads, in one-letter code: Exoribonuclease 2 (664 aa).

The 329-residue stretch at 193–521 (RIDMTHIPFV…INHRMLKALI (329 aa)) folds into the RNB domain. The 83-residue stretch at 568–650 (QTLFTGEIFD…ENRSLVAKPT (83 aa)) folds into the S1 motif domain.

This sequence belongs to the RNR ribonuclease family. RNase II subfamily.

The protein localises to the cytoplasm. The catalysed reaction is Exonucleolytic cleavage in the 3'- to 5'-direction to yield nucleoside 5'-phosphates.. In terms of biological role, involved in mRNA degradation. Hydrolyzes single-stranded polyribonucleotides processively in the 3' to 5' direction. This Vibrio vulnificus (strain YJ016) protein is Exoribonuclease 2.